A 602-amino-acid polypeptide reads, in one-letter code: Glutamine--fructose-6-phosphate aminotransferase [isomerizing] (602 aa).

The active-site Nucleophile; for GATase activity is the Cys2. The Glutamine amidotransferase type-2 domain occupies 2–217 (CGIVGVVGNT…DQELVIVKAD (216 aa)). The interval 67–87 (IGHTRWATHGKPTEDNAHPHR) is disordered. Residues 77 to 87 (KPTEDNAHPHR) show a composition bias toward basic and acidic residues. SIS domains lie at 283–422 (IIKA…ANGN) and 455–592 (VREL…VDKP). The active-site For Fru-6P isomerization activity is the Lys597.

As to quaternary structure, homodimer.

It is found in the cytoplasm. It catalyses the reaction D-fructose 6-phosphate + L-glutamine = D-glucosamine 6-phosphate + L-glutamate. Catalyzes the first step in hexosamine metabolism, converting fructose-6P into glucosamine-6P using glutamine as a nitrogen source. In Streptococcus pneumoniae (strain ATCC BAA-255 / R6), this protein is Glutamine--fructose-6-phosphate aminotransferase [isomerizing].